A 712-amino-acid chain; its full sequence is Polyribonucleotide nucleotidyltransferase (712 aa).

Aspartate 493 and aspartate 499 together coordinate Mg(2+). Residues 560–619 (PRLLTFKVDPEDIGKIIGPGGKTVRGITEATGAKVDISDDGTITVSSSVGGQAEAARAMI) form the KH domain. Residues 629-697 (GQVYLGKVTR…HKGRINLTRL (69 aa)) form the S1 motif domain.

It belongs to the polyribonucleotide nucleotidyltransferase family. Requires Mg(2+) as cofactor.

It is found in the cytoplasm. The enzyme catalyses RNA(n+1) + phosphate = RNA(n) + a ribonucleoside 5'-diphosphate. Its function is as follows. Involved in mRNA degradation. Catalyzes the phosphorolysis of single-stranded polyribonucleotides processively in the 3'- to 5'-direction. This is Polyribonucleotide nucleotidyltransferase from Synechococcus sp. (strain JA-2-3B'a(2-13)) (Cyanobacteria bacterium Yellowstone B-Prime).